The chain runs to 217 residues: Large ribosomal subunit protein uL1 (217 aa).

This sequence belongs to the universal ribosomal protein uL1 family. As to quaternary structure, component of the large ribosomal subunit (LSU). Mature N.crassa ribosomes consist of a small (40S) and a large (60S) subunit. The 40S small subunit contains 1 molecule of ribosomal RNA (18S rRNA) and at least 32 different proteins. The large 60S subunit contains 3 rRNA molecules (26S, 5.8S and 5S rRNA) and at least 42 different proteins. uL1 forms part of the L1 stalk.

The protein localises to the cytoplasm. Component of the ribosome, a large ribonucleoprotein complex responsible for the synthesis of proteins in the cell. The small ribosomal subunit (SSU) binds messenger RNAs (mRNAs) and translates the encoded message by selecting cognate aminoacyl-transfer RNA (tRNA) molecules. The large subunit (LSU) contains the ribosomal catalytic site termed the peptidyl transferase center (PTC), which catalyzes the formation of peptide bonds, thereby polymerizing the amino acids delivered by tRNAs into a polypeptide chain. The nascent polypeptides leave the ribosome through a tunnel in the LSU and interact with protein factors that function in enzymatic processing, targeting, and the membrane insertion of nascent chains at the exit of the ribosomal tunnel. uL1 forms part of the L1 stalk, a mobile element that plays a role in evacuating the exit-site tRNA. This chain is Large ribosomal subunit protein uL1 (crp-74), found in Neurospora crassa (strain ATCC 24698 / 74-OR23-1A / CBS 708.71 / DSM 1257 / FGSC 987).